The following is a 567-amino-acid chain: Urease subunit alpha (567 aa).

In terms of domain architecture, Urease spans 128 to 567; it reads GGIDPHIHFI…LPLAQLYHLF (440 aa). Histidine 133, histidine 135, and lysine 216 together coordinate Ni(2+). Lysine 216 carries the post-translational modification N6-carboxylysine. Histidine 218 provides a ligand contact to substrate. Histidine 245 and histidine 271 together coordinate Ni(2+). The active-site Proton donor is histidine 319. Aspartate 359 is a Ni(2+) binding site.

It belongs to the metallo-dependent hydrolases superfamily. Urease alpha subunit family. Heterotrimer of UreA (gamma), UreB (beta) and UreC (alpha) subunits. Three heterotrimers associate to form the active enzyme. Requires Ni cation as cofactor. In terms of processing, carboxylation allows a single lysine to coordinate two nickel ions.

The protein resides in the cytoplasm. It carries out the reaction urea + 2 H2O + H(+) = hydrogencarbonate + 2 NH4(+). It functions in the pathway nitrogen metabolism; urea degradation; CO(2) and NH(3) from urea (urease route): step 1/1. This chain is Urease subunit alpha, found in Marinobacter nauticus (strain ATCC 700491 / DSM 11845 / VT8) (Marinobacter aquaeolei).